The sequence spans 397 residues: Ribosomal RNA large subunit methyltransferase I (397 aa).

A PUA domain is found at 2 to 79 (TAAIYLVKGR…KEEINKAFFV (78 aa)).

It belongs to the methyltransferase superfamily. RlmI family.

The protein resides in the cytoplasm. The catalysed reaction is cytidine(1962) in 23S rRNA + S-adenosyl-L-methionine = 5-methylcytidine(1962) in 23S rRNA + S-adenosyl-L-homocysteine + H(+). Its function is as follows. Specifically methylates the cytosine at position 1962 (m5C1962) of 23S rRNA. The sequence is that of Ribosomal RNA large subunit methyltransferase I from Vibrio parahaemolyticus serotype O3:K6 (strain RIMD 2210633).